The following is a 392-amino-acid chain: Stilbene synthase 3 (392 aa).

55-58 (KFNR) provides a ligand contact to substrate. Cysteine 164 is a catalytic residue. Substrate contacts are provided by residues leucine 267 and 305–307 (GGP).

It belongs to the thiolase-like superfamily. Chalcone/stilbene synthases family. In terms of assembly, homodimer.

It is found in the cytoplasm. The catalysed reaction is 4-coumaroyl-CoA + 3 malonyl-CoA + 3 H(+) = trans-resveratrol + 4 CO2 + 4 CoA. It functions in the pathway phytoalexin biosynthesis; 3,4',5-trihydroxystilbene biosynthesis; 3,4',5-trihydroxystilbene from trans-4-coumarate: step 2/2. Its function is as follows. Mediates resistance to pathogens which are sensitive to stilbenes. In Vitis vinifera (Grape), this protein is Stilbene synthase 3.